A 103-amino-acid chain; its full sequence is METTNGTETWYESLHAVLKALNATLHSNLLCRPGPGLGPDNQTEERRASLPGRDDNSYMYILFVMFLFAVTVGSLILGYTRSRKVDKRSDPYHVYIKNRVSMI.

N-linked (GlcNAc...) asparagine glycosylation is found at Asn-5, Asn-22, and Asn-41. Residues 32 to 53 (RPGPGLGPDNQTEERRASLPGR) are disordered. Positions 43–53 (TEERRASLPGR) are enriched in basic and acidic residues. Residues 57-77 (SYMYILFVMFLFAVTVGSLIL) form a helical membrane-spanning segment. Residues 68–79 (FAVTVGSLILGY) form an interaction with KCNQ1 region. Over 78–103 (GYTRSRKVDKRSDPYHVYIKNRVSMI) the chain is Cytoplasmic.

Belongs to the potassium channel KCNE family. In terms of assembly, interacts with KCNB1. Interacts with KCNC2. Associates with KCNC4/Kv3.4. Interacts with KCNQ1; associates with a KCNQ1:KCNE3 stoichiometry of 4:4; produces a current with nearly instantaneous activation with a linear current-voltage relationship and alters membrane raft localization; affects KCNQ1 structure and gating properties. As to expression, expressed in hippocampal neurons (at protein level). Widely expressed with highest levels in kidney and moderate levels in small intestine.

It is found in the cell membrane. It localises to the cytoplasm. The protein resides in the perikaryon. Its subcellular location is the cell projection. The protein localises to the dendrite. It is found in the membrane raft. Functionally, ancillary protein that functions as a regulatory subunit of the voltage-gated potassium (Kv) channel complex composed of pore-forming and potassium-conducting alpha subunits and of regulatory beta subunits. KCNE3 beta subunit modulates the gating kinetics and enhances stability of the channel complex. Alters the gating of the delayed rectifier Kv channel containing KCNB1 alpha subunit. Associates with KCNC4/Kv3.4 alpha subunit to form the subthreshold Kv channel in skeletal muscle and to establish the resting membrane potential (RMP) in muscle cells. Association with KCNQ1/KCLQT1 alpha subunit may form the intestinal cAMP-stimulated potassium channel involved in chloride secretion that produces a current with nearly instantaneous activation with a linear current-voltage relationship. The protein is Potassium voltage-gated channel subfamily E member 3 of Homo sapiens (Human).